The sequence spans 1220 residues: Pesticidal crystal protein Cry5Ac (1220 aa).

The tract at residues 1194–1220 is disordered; the sequence is PLPTDDQNSEGNTAFSTNSDTSMNNNQ. Polar residues predominate over residues 1198-1220; it reads DDQNSEGNTAFSTNSDTSMNNNQ.

The protein belongs to the delta endotoxin family.

Promotes colloidosmotic lysis by binding to the midgut epithelial cells of hymenopteran species. The polypeptide is Pesticidal crystal protein Cry5Ac (cry5Ac) (Bacillus thuringiensis).